The chain runs to 347 residues: uncharacterized protein (347 aa).

The segment at 5–44 (CTICHNTPNRPVRLDCNHEFCYICIKGSIQNDMLNCAVCR) adopts an RING-type zinc-finger fold. In terms of domain architecture, WWE spans 244–321 (NVQANFNVAR…NLDAWRQIKR (78 aa)).

This is an uncharacterized protein from Caenorhabditis elegans.